The primary structure comprises 1397 residues: Clustered mitochondria protein homolog (1397 aa).

The TPR 1 repeat unit spans residues 30–63 (LPSFIDQKGDLKIPSHYEETITDLKLTLTVIPKT). Disordered regions lie at residues 158–203 (TARG…LSRE) and 526–555 (DAAP…DEEE). Over residues 161–203 (GEAEKSDTNEEEQEQGKGKVGKPNEKESGETKETDSQPELSRE) the composition is skewed to basic and acidic residues. Residues 368–640 (DSSRSQLMLI…RTTPRDIEFI (273 aa)) form the Clu domain. One copy of the TPR 2 repeat lies at 559–595 (EKVLYGLSSDSQKILEDKSFEKPLKLLSEVFHLKPHG). Composition is skewed to basic and acidic residues over residues 686 to 703 (EGKL…EEKS), 812 to 831 (EKVE…KERA), 839 to 860 (SDDK…NTES), and 1019 to 1033 (QREQ…NVEK). 3 disordered regions span residues 686–707 (EGKL…QIAL), 812–869 (EKVE…EEQP), and 1019–1050 (QREQ…PIEN). A compositionally biased stretch (basic residues) spans 1034 to 1043 (KHSKKSKKKS). 2 TPR repeats span residues 1167 to 1200 (IAAY…WTST) and 1209 to 1242 (VNLL…CSHL). Composition is skewed to polar residues over residues 1314-1338 (AQSK…SQAS) and 1362-1373 (PQSDPQIANQSV). Positions 1314 to 1397 (AQSKKSPPPT…AKSKSKHTKA (84 aa)) are disordered. The span at 1375–1384 (DILKFIEGKS) shows a compositional bias: basic and acidic residues. The segment covering 1386-1397 (PNAKSKSKHTKA) has biased composition (basic residues).

The protein belongs to the CLU family. As to quaternary structure, may associate with the eukaryotic translation initiation factor 3 (eIF-3) complex.

It localises to the cytoplasm. In terms of biological role, mRNA-binding protein involved in proper cytoplasmic distribution of mitochondria. This chain is Clustered mitochondria protein homolog, found in Lodderomyces elongisporus (strain ATCC 11503 / CBS 2605 / JCM 1781 / NBRC 1676 / NRRL YB-4239) (Yeast).